A 205-amino-acid polypeptide reads, in one-letter code: Recombination protein RecR (205 aa).

A C4-type zinc finger spans residues 60-75 (CKVCHNISDTETCQIC). One can recognise a Toprim domain in the interval 83 to 178 (STVCVVENIR…KLSVIARGIS (96 aa)).

It belongs to the RecR family.

Functionally, may play a role in DNA repair. It seems to be involved in an RecBC-independent recombinational process of DNA repair. It may act with RecF and RecO. The sequence is that of Recombination protein RecR from Bacteroides thetaiotaomicron (strain ATCC 29148 / DSM 2079 / JCM 5827 / CCUG 10774 / NCTC 10582 / VPI-5482 / E50).